The chain runs to 309 residues: G-protein coupled receptor 35 (309 aa).

Over 1–24 (MNGTYNTCGSSDLTWPPAIKLGFY) the chain is Extracellular. The N-linked (GlcNAc...) asparagine glycan is linked to asparagine 2. A helical membrane pass occupies residues 25–45 (AYLGVLLVLGLLLNSLALWVF). The Cytoplasmic portion of the chain corresponds to 46 to 56 (CCRMQQWTETR). Residues 57-77 (IYMTNLAVADLCLLCTLPFVL) traverse the membrane as a helical segment. The Extracellular portion of the chain corresponds to 78–90 (HSLRDTSDTPLCQ). Cysteine 89 and cysteine 162 are oxidised to a cystine. The chain crosses the membrane as a helical span at residues 91-112 (LSQGIYLTNRYMSISLVTAIAV). Residues 113–135 (DRYVAVRHPLRARGLRSPRQAAA) lie on the Cytoplasmic side of the membrane. Residues 136–156 (VCAVLWVLVIGSLVARWLLGI) form a helical membrane-spanning segment. At 157–174 (QEGGFCFRSTRHNFNSMA) the chain is on the extracellular side. The chain crosses the membrane as a helical span at residues 175–195 (FPLLGFYLPLAVVVFCSLKVV). The Cytoplasmic segment spans residues 196–218 (TALAQRPPTDVGQAEATRKAARM). The helical transmembrane segment at 219-239 (VWANLLVFVVCFLPLHVGLTV) threads the bilayer. At 240–258 (RLAVGWNACALLETIRRAL) the chain is on the extracellular side. The helical transmembrane segment at 259–279 (YITSKLSDANCCLDAICYYYM) threads the bilayer. Residues 280–309 (AKEFQEASALAVAPSAKAHKSQDSLCVTLA) lie on the Cytoplasmic side of the membrane. A phosphoserine mark is found at serine 287 and serine 294. A phosphoserine; by GRK5 and GRK6 mark is found at serine 300 and serine 303. At threonine 307 the chain carries Phosphothreonine.

The protein belongs to the G-protein coupled receptor 1 family. Interacts with GNA13. Interacts with ARRB2. Multiply phosphorylated in clusters of serines and threonines in the C-terminal tail. Phosphorylation of Ser-300 and Ser-303 is mediated by GRK5 and/or GRK6. In terms of tissue distribution, predominantly expressed in immune and gastrointestinal tissues.

The protein localises to the cell membrane. In terms of biological role, G-protein coupled receptor that binds to several ligands including the tryptophan metabolite kynurenic acid (KYNA), lysophosphatidic acid (LPA) or 5-hydroxyindoleacetic acid (5-HIAA) with high affinity, leading to rapid and transient activation of numerous intracellular signaling pathways. Plays a role in neutrophil recruitment to sites of inflammation and bacterial clearance through the major serotonin metabolite 5-HIAA that acts as a physiological ligand. Stimulates lipid metabolism, thermogenic, and anti-inflammatory gene expression in adipose tissue once activated by kynurenic acid. In macrophages, activation by lysophosphatidic acid promotes GPR35-induced signaling with a distinct transcriptional profile characterized by TNF production associated with ERK and NF-kappa-B activation. In turn, induces chemotaxis of macrophages. This is G-protein coupled receptor 35 (GPR35) from Homo sapiens (Human).